The following is a 462-amino-acid chain: Cytochrome P450 20A1 (462 aa).

A helical transmembrane segment spans residues 4–24; the sequence is FAIFAVTFLLALVGAVLYLYP. Residue Cys409 coordinates heme.

It belongs to the cytochrome P450 family. The cofactor is heme.

The protein localises to the membrane. This is Cytochrome P450 20A1 (Cyp20a1) from Mus musculus (Mouse).